We begin with the raw amino-acid sequence, 130 residues long: Translation initiation factor 5A (130 aa).

Residue Lys36 is modified to Hypusine.

It belongs to the eIF-5A family.

The protein resides in the cytoplasm. Its function is as follows. Functions by promoting the formation of the first peptide bond. The chain is Translation initiation factor 5A (eif5a) from Methanothermobacter thermautotrophicus (strain ATCC 29096 / DSM 1053 / JCM 10044 / NBRC 100330 / Delta H) (Methanobacterium thermoautotrophicum).